A 426-amino-acid chain; its full sequence is Glutamate-1-semialdehyde 2,1-aminomutase (426 aa).

An N6-(pyridoxal phosphate)lysine modification is found at Lys265.

It belongs to the class-III pyridoxal-phosphate-dependent aminotransferase family. HemL subfamily. As to quaternary structure, homodimer. Pyridoxal 5'-phosphate serves as cofactor.

The protein localises to the cytoplasm. The enzyme catalyses (S)-4-amino-5-oxopentanoate = 5-aminolevulinate. It participates in porphyrin-containing compound metabolism; protoporphyrin-IX biosynthesis; 5-aminolevulinate from L-glutamyl-tRNA(Glu): step 2/2. This Salmonella typhimurium (strain SL1344) protein is Glutamate-1-semialdehyde 2,1-aminomutase (hemL).